The sequence spans 142 residues: Large ribosomal subunit protein uL13 (142 aa).

It belongs to the universal ribosomal protein uL13 family. As to quaternary structure, part of the 50S ribosomal subunit.

In terms of biological role, this protein is one of the early assembly proteins of the 50S ribosomal subunit, although it is not seen to bind rRNA by itself. It is important during the early stages of 50S assembly. The chain is Large ribosomal subunit protein uL13 from Ralstonia pickettii (strain 12J).